A 463-amino-acid polypeptide reads, in one-letter code: Asparagine--tRNA ligase (463 aa).

The protein belongs to the class-II aminoacyl-tRNA synthetase family. As to quaternary structure, homodimer.

Its subcellular location is the cytoplasm. The enzyme catalyses tRNA(Asn) + L-asparagine + ATP = L-asparaginyl-tRNA(Asn) + AMP + diphosphate + H(+). The sequence is that of Asparagine--tRNA ligase from Alkaliphilus metalliredigens (strain QYMF).